The primary structure comprises 612 residues: tRNA 5-methylaminomethyl-2-thiouridine biosynthesis bifunctional protein MnmC (612 aa).

Positions 1–218 (MITFRGDGLY…KREILEASLE (218 aa)) are tRNA (mnm(5)s(2)U34)-methyltransferase. Residues 244-612 (IGAGVAGLAA…VRKLKRGLVR (369 aa)) are FAD-dependent cmnm(5)s(2)U34 oxidoreductase.

The protein in the N-terminal section; belongs to the methyltransferase superfamily. tRNA (mnm(5)s(2)U34)-methyltransferase family. It in the C-terminal section; belongs to the DAO family. The cofactor is FAD.

It is found in the cytoplasm. It carries out the reaction 5-aminomethyl-2-thiouridine(34) in tRNA + S-adenosyl-L-methionine = 5-methylaminomethyl-2-thiouridine(34) in tRNA + S-adenosyl-L-homocysteine + H(+). Catalyzes the last two steps in the biosynthesis of 5-methylaminomethyl-2-thiouridine (mnm(5)s(2)U) at the wobble position (U34) in tRNA. Catalyzes the FAD-dependent demodification of cmnm(5)s(2)U34 to nm(5)s(2)U34, followed by the transfer of a methyl group from S-adenosyl-L-methionine to nm(5)s(2)U34, to form mnm(5)s(2)U34. The chain is tRNA 5-methylaminomethyl-2-thiouridine biosynthesis bifunctional protein MnmC from Campylobacter fetus subsp. fetus (strain 82-40).